The following is a 353-amino-acid chain: B1 bradykinin receptor (353 aa).

Residues 1–40 lie on the Extracellular side of the membrane; sequence MASSWPPLELQSSNQSQLFPQNATACDNAPEAWDLLHRVL. 2 N-linked (GlcNAc...) asparagine glycosylation sites follow: Asn-14 and Asn-22. A helical membrane pass occupies residues 41–64; that stretch reads PTFIISICFFGLLGNLFVLLVFLL. Residues 65 to 73 are Cytoplasmic-facing; it reads PRRQLNVAE. The helical transmembrane segment at 74 to 98 threads the bilayer; it reads IYLANLAASDLVFVLGLPFWAENIW. The Extracellular segment spans residues 99-111; that stretch reads NQFNWPFGALLCR. Cys-110 and Cys-189 are oxidised to a cystine. A helical membrane pass occupies residues 112–133; it reads VINGVIKANLFISIFLVVAISQ. The Cytoplasmic portion of the chain corresponds to 134–155; sequence DRYRVLVHPMASRRQQRRRQAR. Residues 156-178 traverse the membrane as a helical segment; sequence VTCVLIWVVGGLLSIPTFLLRSI. The Extracellular segment spans residues 179-199; sequence QAVPDLNITACILLLPHEAWH. A glycan (N-linked (GlcNAc...) asparagine) is linked at Asn-185. The helical transmembrane segment at 200–226 threads the bilayer; the sequence is FARIVELNILGFLLPLAAIVFFNYHIL. At 227 to 247 the chain is on the cytoplasmic side; the sequence is ASLRTREEVSRTRCGGRKDSK. Residues 248 to 272 form a helical membrane-spanning segment; it reads TTALILTLVVAFLVCWAPYHFFAFL. Topologically, residues 273-291 are extracellular; it reads EFLFQVQAVRGCFWEDFID. Residues 292–314 form a helical membrane-spanning segment; it reads LGLQLANFFAFTNSSLNPVIYVF. At 315-353 the chain is on the cytoplasmic side; it reads VGRLFRTKVWELYKQCTPKSLAPISSSHRKEIFQLFWRN. A lipid anchor (S-palmitoyl cysteine) is attached at Cys-330.

The protein belongs to the G-protein coupled receptor 1 family. Bradykinin receptor subfamily. BDKRB1 sub-subfamily.

It localises to the cell membrane. Its function is as follows. This is a receptor for bradykinin. Could be a factor in chronic pain and inflammation. The protein is B1 bradykinin receptor (BDKRB1) of Homo sapiens (Human).